A 252-amino-acid chain; its full sequence is Triosephosphate isomerase (252 aa).

A substrate-binding site is contributed by 9–11; that stretch reads NWK. The active-site Electrophile is H96. E168 serves as the catalytic Proton acceptor. Substrate is bound by residues G174, S214, and 235–236; that span reads GG.

It belongs to the triosephosphate isomerase family. As to quaternary structure, homodimer.

It localises to the cytoplasm. The enzyme catalyses D-glyceraldehyde 3-phosphate = dihydroxyacetone phosphate. The protein operates within carbohydrate biosynthesis; gluconeogenesis. Its pathway is carbohydrate degradation; glycolysis; D-glyceraldehyde 3-phosphate from glycerone phosphate: step 1/1. Involved in the gluconeogenesis. Catalyzes stereospecifically the conversion of dihydroxyacetone phosphate (DHAP) to D-glyceraldehyde-3-phosphate (G3P). The chain is Triosephosphate isomerase from Chloroherpeton thalassium (strain ATCC 35110 / GB-78).